The sequence spans 265 residues: Small ribosomal subunit protein uS3 (265 aa).

Positions 43–111 constitute a KH type-2 domain; that stretch reads IRTMLKTSLD…QIQLNILEVK (69 aa). A disordered region spans residues 217 to 265; it reads AREQANQKSSRPERRNDRSDGRTGDRRTNAPRTAPAAEAAPVAAAGVEA. The span at 226 to 244 shows a compositional bias: basic and acidic residues; the sequence is SRPERRNDRSDGRTGDRRT. Positions 250-265 are enriched in low complexity; the sequence is APAAEAAPVAAAGVEA.

The protein belongs to the universal ribosomal protein uS3 family. In terms of assembly, part of the 30S ribosomal subunit. Forms a tight complex with proteins S10 and S14.

Its function is as follows. Binds the lower part of the 30S subunit head. Binds mRNA in the 70S ribosome, positioning it for translation. The polypeptide is Small ribosomal subunit protein uS3 (Clavibacter michiganensis subsp. michiganensis (strain NCPPB 382)).